The chain runs to 280 residues: Pantothenate synthetase (280 aa).

30 to 37 contacts ATP; sequence MGALHEGH. The Proton donor role is filled by H37. Q61 contributes to the (R)-pantoate binding site. Q61 provides a ligand contact to beta-alanine. 147–150 contributes to the ATP binding site; that stretch reads GQKD. Q153 lines the (R)-pantoate pocket. ATP is bound by residues V176 and 184–187; that span reads MSSR.

It belongs to the pantothenate synthetase family. Homodimer.

It localises to the cytoplasm. The catalysed reaction is (R)-pantoate + beta-alanine + ATP = (R)-pantothenate + AMP + diphosphate + H(+). It functions in the pathway cofactor biosynthesis; (R)-pantothenate biosynthesis; (R)-pantothenate from (R)-pantoate and beta-alanine: step 1/1. In terms of biological role, catalyzes the condensation of pantoate with beta-alanine in an ATP-dependent reaction via a pantoyl-adenylate intermediate. The polypeptide is Pantothenate synthetase (Thermodesulfovibrio yellowstonii (strain ATCC 51303 / DSM 11347 / YP87)).